Consider the following 89-residue polypeptide: Putative antitoxin VapB42 (89 aa).

In terms of biological role, possibly the antitoxin component of a type II toxin-antitoxin (TA) system. Its cognate toxin is VapC42 (Potential). The chain is Putative antitoxin VapB42 (vapB42) from Mycobacterium tuberculosis (strain CDC 1551 / Oshkosh).